A 408-amino-acid chain; its full sequence is Peptidase T (408 aa).

Zn(2+) is bound at residue His-78. Residue Asp-80 is part of the active site. Residue Asp-141 coordinates Zn(2+). Glu-175 functions as the Proton acceptor in the catalytic mechanism. Zn(2+)-binding residues include Glu-176, Asp-198, and His-380.

It belongs to the peptidase M20B family. Zn(2+) is required as a cofactor.

It is found in the cytoplasm. The catalysed reaction is Release of the N-terminal residue from a tripeptide.. Functionally, cleaves the N-terminal amino acid of tripeptides. In Clostridium botulinum (strain Okra / Type B1), this protein is Peptidase T.